A 477-amino-acid chain; its full sequence is Tyrosine-protein kinase transforming protein Fes (477 aa).

Residues 49 to 76 (GEPPPVLLLQDDRHSTSSSEQEREGGRT) form a disordered region. The span at 58–74 (QDDRHSTSSSEQEREGG) shows a compositional bias: basic and acidic residues. The 90-residue stretch at 115-204 (WYHGALPRAE…KSGIVLNRAV (90 aa)) folds into the SH2 domain. Positions 216–477 (LVLGEQIGRG…ELQSIRKRHR (262 aa)) constitute a Protein kinase domain. Residues 222–230 (IGRGNFGEV) and K245 each bind ATP. The active-site Proton acceptor is D338. Y368 bears the Phosphotyrosine; by autocatalysis mark.

The protein belongs to the protein kinase superfamily. Tyr protein kinase family. Fes/fps subfamily.

It carries out the reaction L-tyrosyl-[protein] + ATP = O-phospho-L-tyrosyl-[protein] + ADP + H(+). In Feline sarcoma virus (strain Snyder-Theilen), this protein is Tyrosine-protein kinase transforming protein Fes (V-FES).